The primary structure comprises 404 residues: Adenosylhomocysteinase (404 aa).

The substrate site is built by D114 and E139. NAD(+) is bound at residue 140-142; the sequence is TTT. Residues K169 and D173 each contribute to the substrate site. Residues N174, 203-208, E226, N261, 282-284, and N329 contribute to the NAD(+) site; these read GYGWCG and AGH.

The protein belongs to the adenosylhomocysteinase family. NAD(+) is required as a cofactor.

It localises to the cytoplasm. It catalyses the reaction S-adenosyl-L-homocysteine + H2O = L-homocysteine + adenosine. Its pathway is amino-acid biosynthesis; L-homocysteine biosynthesis; L-homocysteine from S-adenosyl-L-homocysteine: step 1/1. In terms of biological role, may play a key role in the regulation of the intracellular concentration of adenosylhomocysteine. This Thermotoga maritima (strain ATCC 43589 / DSM 3109 / JCM 10099 / NBRC 100826 / MSB8) protein is Adenosylhomocysteinase.